The following is an 859-amino-acid chain: Envelope glycoprotein gp160 (859 aa).

Positions 1-23 (MAYFSSRLPIALLLIGISGFVCK) are cleaved as a signal peptide. The Extracellular portion of the chain corresponds to 24-678 (QYVTVFYGIP…WFDLTSWIKY (655 aa)). N-linked (GlcNAc...) asparagine; by host glycosylation occurs at asparagine 37. Cysteine 44 and cysteine 57 are joined by a disulfide. Residues asparagine 70, asparagine 112, asparagine 122, asparagine 142, asparagine 150, asparagine 165, asparagine 191, asparagine 206, asparagine 238, asparagine 241, asparagine 248, asparagine 272, asparagine 278, asparagine 289, asparagine 300, asparagine 310, asparagine 343, asparagine 367, asparagine 400, asparagine 410, asparagine 413, asparagine 450, asparagine 464, and asparagine 468 are each glycosylated (N-linked (GlcNAc...) asparagine; by host). 5 disulfides stabilise this stretch: cysteine 101–cysteine 214, cysteine 108–cysteine 205, cysteine 113–cysteine 164, cysteine 227–cysteine 257, and cysteine 237–cysteine 249. The tract at residues 113–163 (CSKTETNPGNASSTTTTKPTTTSRGLKTINETDPCIKNDSCTGLGEEEIMQ) is V1. Residues 164 to 205 (CNFSMTGLRRDELKQYKDTWYSEDLECNNTRKYTSRCYIRTC) form a V2 region. The tract at residues 305-337 (CKRPGNKTVVPIRTVSGLLFHSQPINKRPRQAW) is V3. An intrachain disulfide couples cysteine 305 to cysteine 338. Cystine bridges form between cysteine 392–cysteine 449 and cysteine 399–cysteine 422. The V4 stretch occupies residues 399 to 422 (CNMTWFLNWVENKTNTTRRNYAPC). The V5 stretch occupies residues 465–471 (STTNISV). The interval 514–534 (GVMVLGFLGFLAMAGSAMGAT) is fusion peptide. Positions 577–593 (LQARVTAIEKYLKDQAQ) are immunosuppression. 3 N-linked (GlcNAc...) asparagine; by host glycosylation sites follow: asparagine 613, asparagine 622, and asparagine 638. Positions 626–647 (QQWEKQVHFLDANITALLEEAQ) form a coiled coil. An MPER; binding to GalCer region spans residues 659–680 (KINSWDVFGNWFDLTSWIKYIH). The helical transmembrane segment at 679 to 699 (IHLGLYIVAGLVVLRIVVYIV) threads the bilayer. Residues 700 to 859 (QMLARLRKGY…IRQGLELTLL (160 aa)) lie on the Cytoplasmic side of the membrane. Residues 709–712 (YRPV) carry the YXXV motif; contains endocytosis signal motif. The interval 715–744 (SPPSYTQQIPIRKDRGQPANEETEEGGGND) is disordered. Residue cysteine 775 is the site of S-palmitoyl cysteine; by host attachment. The Di-leucine internalization motif motif lies at 858–859 (LL).

As to quaternary structure, the mature envelope protein (Env) consists of a homotrimer of non-covalently associated gp120-gp41 heterodimers. The resulting complex protrudes from the virus surface as a spike. There seems to be as few as 10 spikes on the average virion. Interacts with human CD4, CCR5 and CXCR4, to form a P4HB/PDI-CD4-CXCR4-gp120 complex. Gp120 also interacts with the C-type lectins CD209/DC-SIGN and CLEC4M/DC-SIGNR (collectively referred to as DC-SIGN(R)). Gp120 and gp41 interact with GalCer. In terms of assembly, the mature envelope protein (Env) consists of a homotrimer of non-covalently associated gp120-gp41 heterodimers. The resulting complex protrudes from the virus surface as a spike. There seems to be as few as 10 spikes on the average virion. Post-translationally, specific enzymatic cleavages in vivo yield mature proteins. Envelope glycoproteins are synthesized as an inactive precursor that is heavily N-glycosylated and processed likely by host cell furin in the Golgi to yield the mature SU and TM proteins. The cleavage site between SU and TM requires the minimal sequence [KR]-X-[KR]-R. In terms of processing, palmitoylation of the transmembrane protein and of Env polyprotein (prior to its proteolytic cleavage) is essential for their association with host cell membrane lipid rafts. Palmitoylation is therefore required for envelope trafficking to classical lipid rafts, but not for viral replication.

It is found in the virion membrane. It localises to the host cell membrane. Its subcellular location is the host endosome membrane. The surface protein gp120 (SU) attaches the virus to the host lymphoid cell by binding to the primary receptor CD4. This interaction induces a structural rearrangement creating a high affinity binding site for a chemokine coreceptor like CXCR4 and/or CCR5. This peculiar 2 stage receptor-interaction strategy allows gp120 to maintain the highly conserved coreceptor-binding site in a cryptic conformation, protected from neutralizing antibodies. Since CD4 also displays a binding site for the disulfide-isomerase P4HB/PDI, a P4HB/PDI-CD4-CXCR4-gp120 complex may form. In that complex, P4HB/PDI could reach and reduce gp120 disulfide bonds, causing major conformational changes in gp120. TXN, another PDI family member could also be involved in disulfide rearrangements in Env during fusion. These changes are transmitted to the transmembrane protein gp41 and are thought to activate its fusogenic potential by unmasking its fusion peptide. In terms of biological role, the surface protein gp120 is a ligand for CD209/DC-SIGN and CLEC4M/DC-SIGNR, which are respectively found on dendritic cells (DCs), and on endothelial cells of liver sinusoids and lymph node sinuses. These interactions allow capture of viral particles at mucosal surfaces by these cells and subsequent transmission to permissive cells. DCs are professional antigen presenting cells, critical for host immunity by inducing specific immune responses against a broad variety of pathogens. They act as sentinels in various tissues where they take up antigen, process it, and present it to T-cells following migration to lymphoid organs. HIV subverts the migration properties of dendritic cells to gain access to CD4+ T-cells in lymph nodes. Virus transmission to permissive T-cells occurs either in trans (without DCs infection, through viral capture and transmission), or in cis (following DCs productive infection, through the usual CD4-gp120 interaction), thereby inducing a robust infection. In trans infection, bound virions remain infectious over days and it is proposed that they are not degraded, but protected in non-lysosomal acidic organelles within the DCs close to the cell membrane thus contributing to the viral infectious potential during DCs' migration from the periphery to the lymphoid tissues. On arrival at lymphoid tissues, intact virions recycle back to DCs' cell surface allowing virus transmission to CD4+ T-cells. Virion capture also seems to lead to MHC-II-restricted viral antigen presentation, and probably to the activation of HIV-specific CD4+ cells. Its function is as follows. The transmembrane protein gp41 (TM) acts as a class I viral fusion protein. Under the current model, the protein has at least 3 conformational states: pre-fusion native state, pre-hairpin intermediate state, and post-fusion hairpin state. During fusion of viral and target intracellular membranes, the coiled coil regions (heptad repeats) assume a trimer-of-hairpins structure, positioning the fusion peptide in close proximity to the C-terminal region of the ectodomain. The formation of this structure appears to drive apposition and subsequent fusion of viral and target cell membranes. Complete fusion occurs in host cell endosomes and is dynamin-dependent, however some lipid transfer might occur at the plasma membrane. The virus undergoes clathrin-dependent internalization long before endosomal fusion, thus minimizing the surface exposure of conserved viral epitopes during fusion and reducing the efficacy of inhibitors targeting these epitopes. Membranes fusion leads to delivery of the nucleocapsid into the cytoplasm. Functionally, the envelope glycoprotein gp160 precursor down-modulates cell surface CD4 antigen by interacting with it in the endoplasmic reticulum and blocking its transport to the cell surface. The gp120-gp41 heterodimer seems to contribute to T-cell depletion during HIV-1 infection. The envelope glycoproteins expressed on the surface of infected cells induce apoptosis through an interaction with uninfected cells expressing the receptor (CD4) and the coreceptors CXCR4 or CCR5. This type of bystander killing may be obtained by at least three distinct mechanisms. First, the interaction between the 2 cells can induce cellular fusion followed by nuclear fusion within the syncytium. Syncytia are condemned to die from apoptosis. Second, the 2 interacting cells may not fuse entirely and simply exchange plasma membrane lipids, after a sort of hemifusion process, followed by rapid death. Third, it is possible that virus-infected cells, on the point of undergoing apoptosis, fuse with CD4-expressing cells, in which case apoptosis is rapidly transmitted from one cell to the other and thus occurs in a sort of contagious fashion. In terms of biological role, the gp120-gp41 heterodimer allows rapid transcytosis of the virus through CD4 negative cells such as simple epithelial monolayers of the intestinal, rectal and endocervical epithelial barriers. Both gp120 and gp41 specifically recognize glycosphingolipids galactosyl-ceramide (GalCer) or 3' sulfo-galactosyl-ceramide (GalS) present in the lipid rafts structures of epithelial cells. Binding to these alternative receptors allows the rapid transcytosis of the virus through the epithelial cells. This transcytotic vesicle-mediated transport of virions from the apical side to the basolateral side of the epithelial cells does not involve infection of the cells themselves. The polypeptide is Envelope glycoprotein gp160 (env) (Human immunodeficiency virus type 2 subtype B (isolate D205) (HIV-2)).